Consider the following 742-residue polypeptide: Eukaryotic translation initiation factor 3 subunit B (742 aa).

The span at Met-1–Glu-10 shows a compositional bias: polar residues. A disordered region spans residues Met-1–Glu-20. The 87-residue stretch at Thr-40 to Asp-126 folds into the RRM domain. WD repeat units lie at residues Ala-193–Gln-230, Pro-232–Val-290, Gln-304–Lys-345, Ile-515–Glu-558, and Val-573–Ala-611.

This sequence belongs to the eIF-3 subunit B family. In terms of assembly, component of the eukaryotic translation initiation factor 3 (eIF-3) complex.

Its subcellular location is the cytoplasm. Functionally, RNA-binding component of the eukaryotic translation initiation factor 3 (eIF-3) complex, which is involved in protein synthesis of a specialized repertoire of mRNAs and, together with other initiation factors, stimulates binding of mRNA and methionyl-tRNAi to the 40S ribosome. The eIF-3 complex specifically targets and initiates translation of a subset of mRNAs involved in cell proliferation. The chain is Eukaryotic translation initiation factor 3 subunit B (prt1) from Aspergillus terreus (strain NIH 2624 / FGSC A1156).